The chain runs to 539 residues: Histone-arginine methyltransferase CARMER (539 aa).

Residues 149–458 (ASQYFQFYGY…QSYDVTIDLH (310 aa)) enclose the SAM-dependent MTase PRMT-type domain. S-adenosyl-L-methionine is bound by residues glutamine 162, arginine 171, glycine 195, glutamate 217, glutamate 246, and threonine 274. At arginine 509 the chain carries Asymmetric dimethylarginine; by autocatalysis.

The protein belongs to the class I-like SAM-binding methyltransferase superfamily. Protein arginine N-methyltransferase family. In terms of assembly, homodimer. Post-translationally, the dimethylated protein is the major form.

It localises to the cytoplasm. The protein resides in the nucleus. It carries out the reaction L-arginyl-[protein] + 2 S-adenosyl-L-methionine = N(omega),N(omega)-dimethyl-L-arginyl-[protein] + 2 S-adenosyl-L-homocysteine + 2 H(+). Functionally, methylates (mono- and asymmetric dimethylation) the guanidino nitrogens of arginyl residues in proteins. May methylate histone H3 at 'Arg-17' and activate transcription via chromatin remodeling. This is Histone-arginine methyltransferase CARMER (Art4) from Drosophila mojavensis (Fruit fly).